Reading from the N-terminus, the 338-residue chain is RNA 3'-terminal phosphate cyclase (338 aa).

ATP is bound by residues Q103 and 283-287; that span reads YLADQ. The Tele-AMP-histidine intermediate role is filled by H308.

It belongs to the RNA 3'-terminal cyclase family. Type 1 subfamily.

It localises to the cytoplasm. It catalyses the reaction a 3'-end 3'-phospho-ribonucleotide-RNA + ATP = a 3'-end 2',3'-cyclophospho-ribonucleotide-RNA + AMP + diphosphate. Catalyzes the conversion of 3'-phosphate to a 2',3'-cyclic phosphodiester at the end of RNA. The mechanism of action of the enzyme occurs in 3 steps: (A) adenylation of the enzyme by ATP; (B) transfer of adenylate to an RNA-N3'P to produce RNA-N3'PP5'A; (C) and attack of the adjacent 2'-hydroxyl on the 3'-phosphorus in the diester linkage to produce the cyclic end product. The biological role of this enzyme is unknown but it is likely to function in some aspects of cellular RNA processing. The polypeptide is RNA 3'-terminal phosphate cyclase (Escherichia coli (strain SMS-3-5 / SECEC)).